The chain runs to 753 residues: Rho guanine nucleotide exchange factor gef1 (753 aa).

Disordered regions lie at residues 52–150, 175–194, and 200–245; these read SNSY…DRNR, TLRK…RVSG, and AQNS…ASLL. Polar residues-rich tracts occupy residues 94–105, 114–141, 181–191, and 200–220; these read DPQTPNTPPVSS, GSFN…TLTP, TNTSSNGTSRR, and AQNS…GSST. Over residues 230-245 the composition is skewed to low complexity; sequence TLASMPSSHSSTASLL. In terms of domain architecture, DH spans 311 to 507; it reads KRANLIKELV…QELISGINQK (197 aa).

As to quaternary structure, interacts with cdc42.

The protein resides in the cytoplasm. In terms of biological role, has a role in the control of cell polarity and cytokinesis. Involved in bipolar growth, via modulation of cdc42-shk1-orb6 signaling, and septum formation. Stimulates guanine nucleotide exchange of cdc42. This is Rho guanine nucleotide exchange factor gef1 (gef1) from Schizosaccharomyces pombe (strain 972 / ATCC 24843) (Fission yeast).